A 343-amino-acid chain; its full sequence is L-threonine 3-dehydrogenase (343 aa).

Cys-40 is a binding site for Zn(2+). Catalysis depends on charge relay system residues Thr-42 and His-45. Residues His-65, Glu-66, Cys-95, Cys-98, Cys-101, and Cys-109 each coordinate Zn(2+). NAD(+)-binding positions include Ile-177, Asp-197, Arg-202, 264–266, and 288–289; these read LGI and IY.

The protein belongs to the zinc-containing alcohol dehydrogenase family. Homotetramer. The cofactor is Zn(2+).

Its subcellular location is the cytoplasm. The catalysed reaction is L-threonine + NAD(+) = (2S)-2-amino-3-oxobutanoate + NADH + H(+). It participates in amino-acid degradation; L-threonine degradation via oxydo-reductase pathway; glycine from L-threonine: step 1/2. Functionally, catalyzes the NAD(+)-dependent oxidation of L-threonine to 2-amino-3-ketobutyrate. This is L-threonine 3-dehydrogenase from Photobacterium profundum (strain SS9).